Here is a 425-residue protein sequence, read N- to C-terminus: Glutamyl-tRNA reductase (425 aa).

Residues 47-50 (TCNR), Ser107, 112-114 (EDQ), and Gln118 contribute to the substrate site. Cys48 acts as the Nucleophile in catalysis. An NADP(+)-binding site is contributed by 187–192 (GAGHIA).

This sequence belongs to the glutamyl-tRNA reductase family. In terms of assembly, homodimer.

It catalyses the reaction (S)-4-amino-5-oxopentanoate + tRNA(Glu) + NADP(+) = L-glutamyl-tRNA(Glu) + NADPH + H(+). It functions in the pathway porphyrin-containing compound metabolism; protoporphyrin-IX biosynthesis; 5-aminolevulinate from L-glutamyl-tRNA(Glu): step 1/2. It participates in porphyrin-containing compound metabolism; chlorophyll biosynthesis. Functionally, catalyzes the NADPH-dependent reduction of glutamyl-tRNA(Glu) to glutamate 1-semialdehyde (GSA). The polypeptide is Glutamyl-tRNA reductase (Roseiflexus sp. (strain RS-1)).